A 41-amino-acid polypeptide reads, in one-letter code: Ornatin-A2 (41 aa).

Positions 33–35 (RGD) match the Cell attachment site motif.

Belongs to the ornatin family.

It localises to the secreted. Potent inhibitor of fibrinogen interaction with platelet receptors expressed on glycoprotein IIb-IIIa complex. May prevent blood from clotting during either feeding and/or storage of ingested blood. This Placobdella ornata (Turtle leech) protein is Ornatin-A2.